Consider the following 1257-residue polypeptide: Receptor tyrosine-protein kinase erbB-2 (1257 aa).

The N-terminal stretch at 1–22 (MELAAWCRWGFLLALLPPGIAG) is a signal peptide. The Extracellular portion of the chain corresponds to 23–654 (TQVCTGTDMK…PAEQRASPVT (632 aa)). Cysteine 26 and cysteine 53 are joined by a disulfide. Residues asparagine 68 and asparagine 188 are each glycosylated (N-linked (GlcNAc...) asparagine). 16 disulfides stabilise this stretch: cysteine 163/cysteine 193, cysteine 196/cysteine 205, cysteine 200/cysteine 213, cysteine 221/cysteine 228, cysteine 225/cysteine 236, cysteine 237/cysteine 245, cysteine 241/cysteine 253, cysteine 256/cysteine 265, cysteine 269/cysteine 296, cysteine 300/cysteine 312, cysteine 316/cysteine 332, cysteine 335/cysteine 339, cysteine 343/cysteine 368, cysteine 476/cysteine 506, cysteine 513/cysteine 522, and cysteine 517/cysteine 530. A glycan (N-linked (GlcNAc...) asparagine) is linked at asparagine 260. Asparagine 532 is a glycosylation site (N-linked (GlcNAc...) asparagine). Disulfide bonds link cysteine 533–cysteine 542, cysteine 546–cysteine 562, cysteine 565–cysteine 578, cysteine 569–cysteine 586, cysteine 589–cysteine 598, cysteine 602–cysteine 625, cysteine 628–cysteine 636, and cysteine 632–cysteine 644. Asparagine 573 carries N-linked (GlcNAc...) asparagine glycosylation. Residue asparagine 631 is glycosylated (N-linked (GlcNAc...) asparagine). A helical transmembrane segment spans residues 655-677 (FIIATVVGVLLFLILVVVVGILI). The segment at 678 to 691 (KRRRQKIRKYTMRR) is required for interaction with KPNB1 and EEA1. A Nuclear localization signal motif is present at residues 678-691 (KRRRQKIRKYTMRR). Topologically, residues 678–1257 (KRRRQKIRKY…PEYLGLDVPV (580 aa)) are cytoplasmic. In terms of domain architecture, Protein kinase spans 722–989 (LRKVKVLGSG…RMARDPQRFV (268 aa)). ATP is bound by residues 728 to 736 (LGSGAFGTV) and lysine 755. The active-site Proton acceptor is the aspartate 847. Tyrosine 879 is modified (phosphotyrosine). The tract at residues 1029–1181 (QQGFFSPDPT…PKTLSPGKNG (153 aa)) is disordered. Phosphoserine is present on residues serine 1056, serine 1080, serine 1085, and serine 1109. Tyrosine 1114 bears the Phosphotyrosine mark. Position 1141 is a phosphotyrosine; by autocatalysis (tyrosine 1141). Pro residues predominate over residues 1149-1163 (PQPPLTPEGPLPPVR). Threonine 1168 is modified (phosphothreonine). An interaction with PIK3C2B region spans residues 1197-1199 (EYL). At tyrosine 1198 the chain carries Phosphotyrosine. The tract at residues 1200-1257 (VPREGTASPPHPSPAFSPAFDNLYYWDQNSSEQGPPPSNFEGTPTAENPEYLGLDVPV) is disordered. Phosphotyrosine; by autocatalysis is present on tyrosine 1250.

Belongs to the protein kinase superfamily. Tyr protein kinase family. EGF receptor subfamily. As to quaternary structure, homodimer. Heterodimer with EGFR, ERBB3 and ERBB4. Part of a complex with EGFR and either PIK3C2A or PIK3C2B. May interact with PIK3C2B when phosphorylated on Tyr-1198. Interacts with PRKCABP and PLXNB1. Interacts (when phosphorylated on Tyr-1250) with MEMO1. Interacts with MUC1. Interacts (when phosphorylated on Tyr-1141) with GRB7 (via SH2 domain). Interacts (when phosphorylated on Tyr-1250) with ERBIN Interacts with SRC, KPNB1, RANBP2, EEA1, CRM1, CLTC, PTK6, RPA194, MYOC and ACTB. Interacts with HSP90AA1 and HSP90AB1; the interaction suppresses ERBB2 kinase activity. Interacts with SORL1; this interaction regulates ERBB2 subcellular distribution by promoting its recycling after internalization from endosomes back to the plasma membrane, hence stimulates ERBB2-mediated signaling. Interacts with SH3BGRL. Interacts with ROR1. Post-translationally, autophosphorylated. Autophosphorylation occurs in trans, i.e. one subunit of the dimeric receptor phosphorylates tyrosine residues on the other subunit. Ligand-binding increases phosphorylation on tyrosine residues. Signaling via SEMA4C promotes phosphorylation at Tyr-1250. Dephosphorylated by PTPN12.

It is found in the cell membrane. It localises to the cell projection. The protein resides in the ruffle membrane. The protein localises to the early endosome. Its subcellular location is the cytoplasm. It is found in the perinuclear region. It localises to the nucleus. The enzyme catalyses L-tyrosyl-[protein] + ATP = O-phospho-L-tyrosyl-[protein] + ADP + H(+). Its function is as follows. Protein tyrosine kinase that is part of several cell surface receptor complexes, but that apparently needs a coreceptor for ligand binding. Essential component of a neuregulin-receptor complex, although neuregulins do not interact with it alone. GP30 is a potential ligand for this receptor. Regulates outgrowth and stabilization of peripheral microtubules (MTs). Upon ERBB2 activation, the MEMO1-RHOA-DIAPH1 signaling pathway elicits the phosphorylation and thus the inhibition of GSK3B at cell membrane. This prevents the phosphorylation of APC and CLASP2, allowing its association with the cell membrane. In turn, membrane-bound APC allows the localization of MACF1 to the cell membrane, which is required for microtubule capture and stabilization. Interacts (preferentially with the tyrosine phosphorylated form) with CPNE3; this interaction occurs at the cell membrane and is increased in a growth factor heregulin-dependent manner. In terms of biological role, in the nucleus is involved in transcriptional regulation. Associates with the 5'-TCAAATTC-3' sequence in the PTGS2/COX-2 promoter and activates its transcription. Implicated in transcriptional activation of CDKN1A; the function involves STAT3 and SRC. Involved in the transcription of rRNA genes by RNA Pol I and enhances protein synthesis and cell growth. The polypeptide is Receptor tyrosine-protein kinase erbB-2 (Erbb2) (Rattus norvegicus (Rat)).